The primary structure comprises 225 residues: Pyrimidine 5'-nucleotidase YjjG (225 aa).

D9 serves as the catalytic Nucleophile.

It belongs to the HAD-like hydrolase superfamily. YjjG family. In terms of assembly, monomer, homodimer and possibly homotetramer in solution. Mn(2+) is required as a cofactor. Requires Mg(2+) as cofactor. Co(2+) serves as cofactor.

It localises to the cytoplasm. It catalyses the reaction a ribonucleoside 5'-phosphate + H2O = a ribonucleoside + phosphate. It carries out the reaction a 2'-deoxyribonucleoside 5'-phosphate + H2O = a 2'-deoxyribonucleoside + phosphate. The enzyme catalyses UMP + H2O = uridine + phosphate. The catalysed reaction is dUMP + H2O = 2'-deoxyuridine + phosphate. It catalyses the reaction dTMP + H2O = thymidine + phosphate. Its activity is regulated as follows. In contrast to nucleotidases from other families, is not inhibited by ribo- and deoxyribonucleoside di- and triphosphates. Functionally, nucleotidase that shows high phosphatase activity toward non-canonical pyrimidine nucleotides and three canonical nucleoside 5'-monophosphates (UMP, dUMP, and dTMP), and very low activity against TDP, IMP, UDP, GMP, dGMP, AMP, dAMP, and 6-phosphogluconate. Appears to function as a house-cleaning nucleotidase in vivo, since the general nucleotidase activity of YjjG allows it to protect cells against non-canonical pyrimidine derivatives such as 5-fluoro-2'-deoxyuridine, 5-fluorouridine, 5-fluoroorotate, 5-fluorouracil, and 5-aza-2'-deoxycytidine, and prevents the incorporation of potentially mutagenic nucleotides into DNA. Its dUMP phosphatase activity that catalyzes the hydrolysis of dUMP to deoxyuridine is necessary for thymine utilization via the thymine salvage pathway. Is strictly specific to substrates with 5'-phosphates and shows no activity against nucleoside 2'- or 3'-monophosphates. The chain is Pyrimidine 5'-nucleotidase YjjG (yjjG) from Escherichia coli (strain K12).